Here is a 195-residue protein sequence, read N- to C-terminus: Imidazoleglycerol-phosphate dehydratase (195 aa).

This sequence belongs to the imidazoleglycerol-phosphate dehydratase family.

The protein resides in the cytoplasm. The catalysed reaction is D-erythro-1-(imidazol-4-yl)glycerol 3-phosphate = 3-(imidazol-4-yl)-2-oxopropyl phosphate + H2O. Its pathway is amino-acid biosynthesis; L-histidine biosynthesis; L-histidine from 5-phospho-alpha-D-ribose 1-diphosphate: step 6/9. In Beijerinckia indica subsp. indica (strain ATCC 9039 / DSM 1715 / NCIMB 8712), this protein is Imidazoleglycerol-phosphate dehydratase.